The chain runs to 338 residues: Glyceraldehyde-3-phosphate dehydrogenase, cytosolic (338 aa).

Residues 14 to 15, Asp-36, and Arg-83 each bind NAD(+); that span reads RI. D-glyceraldehyde 3-phosphate is bound by residues 154–156, Thr-185, 214–215, and Arg-237; these read SCT and TG. The active-site Nucleophile is the Cys-155. Asn-319 contributes to the NAD(+) binding site.

The protein belongs to the glyceraldehyde-3-phosphate dehydrogenase family. Homotetramer.

The protein localises to the cytoplasm. It catalyses the reaction D-glyceraldehyde 3-phosphate + phosphate + NAD(+) = (2R)-3-phospho-glyceroyl phosphate + NADH + H(+). The protein operates within carbohydrate degradation; glycolysis; pyruvate from D-glyceraldehyde 3-phosphate: step 1/5. In terms of biological role, key enzyme in glycolysis that catalyzes the first step of the pathway by converting D-glyceraldehyde 3-phosphate (G3P) into 3-phospho-D-glyceroyl phosphate. Essential for the maintenance of cellular ATP levels and carbohydrate metabolism. The chain is Glyceraldehyde-3-phosphate dehydrogenase, cytosolic (GAPC1) from Pisum sativum (Garden pea).